The primary structure comprises 213 residues: NADH-quinone oxidoreductase subunit I (213 aa).

2 consecutive 4Fe-4S ferredoxin-type domains span residues 74–103 and 113–142; these read RFIE…METS and GNYS…HGIE. Cys-83, Cys-86, Cys-89, Cys-93, Cys-122, Cys-125, Cys-128, and Cys-132 together coordinate [4Fe-4S] cluster.

This sequence belongs to the complex I 23 kDa subunit family. In terms of assembly, NDH-1 is composed of 14 different subunits. Subunits NuoA, H, J, K, L, M, N constitute the membrane sector of the complex. [4Fe-4S] cluster is required as a cofactor.

The protein localises to the cell inner membrane. The enzyme catalyses a quinone + NADH + 5 H(+)(in) = a quinol + NAD(+) + 4 H(+)(out). In terms of biological role, NDH-1 shuttles electrons from NADH, via FMN and iron-sulfur (Fe-S) centers, to quinones in the respiratory chain. The immediate electron acceptor for the enzyme in this species is believed to be ubiquinone. Couples the redox reaction to proton translocation (for every two electrons transferred, four hydrogen ions are translocated across the cytoplasmic membrane), and thus conserves the redox energy in a proton gradient. The polypeptide is NADH-quinone oxidoreductase subunit I (Campylobacter jejuni subsp. doylei (strain ATCC BAA-1458 / RM4099 / 269.97)).